A 332-amino-acid polypeptide reads, in one-letter code: Succinylglutamate desuccinylase (332 aa).

Positions 59, 62, and 151 each coordinate Zn(2+). Glu215 is a catalytic residue.

This sequence belongs to the AspA/AstE family. Succinylglutamate desuccinylase subfamily. It depends on Zn(2+) as a cofactor.

It catalyses the reaction N-succinyl-L-glutamate + H2O = L-glutamate + succinate. It participates in amino-acid degradation; L-arginine degradation via AST pathway; L-glutamate and succinate from L-arginine: step 5/5. Functionally, transforms N(2)-succinylglutamate into succinate and glutamate. In Pseudomonas paraeruginosa (strain DSM 24068 / PA7) (Pseudomonas aeruginosa (strain PA7)), this protein is Succinylglutamate desuccinylase.